Consider the following 375-residue polypeptide: UPF0612 protein C569.003 (375 aa).

It belongs to the UPF0612 family.

The protein resides in the cytoplasm. This Schizosaccharomyces pombe (strain 972 / ATCC 24843) (Fission yeast) protein is UPF0612 protein C569.003.